Here is a 308-residue protein sequence, read N- to C-terminus: Malonate utilization transcriptional regulator (308 aa).

The region spanning 9 to 66 (ITFRKLSVFMMFMAKGNIARTAEAMKLSSVSVHRALHTLEEGVGCPLFVHKGRNLLPL) is the HTH lysR-type domain. A DNA-binding region (H-T-H motif) is located at residues 26 to 45 (IARTAEAMKLSSVSVHRALH).

It belongs to the LysR transcriptional regulatory family.

Functionally, transcriptional regulator of the mau genes for malonate utilization. This chain is Malonate utilization transcriptional regulator (mauR), found in Klebsiella pneumoniae.